Consider the following 232-residue polypeptide: Orotidine 5'-phosphate decarboxylase (232 aa).

Substrate is bound by residues D16, K38, 65 to 74 (DLKLHDIGNT), T119, R180, Q189, G209, and R210. K67 acts as the Proton donor in catalysis.

It belongs to the OMP decarboxylase family. Type 1 subfamily. As to quaternary structure, homodimer.

The enzyme catalyses orotidine 5'-phosphate + H(+) = UMP + CO2. It functions in the pathway pyrimidine metabolism; UMP biosynthesis via de novo pathway; UMP from orotate: step 2/2. In terms of biological role, catalyzes the decarboxylation of orotidine 5'-monophosphate (OMP) to uridine 5'-monophosphate (UMP). The protein is Orotidine 5'-phosphate decarboxylase of Methylorubrum extorquens (strain PA1) (Methylobacterium extorquens).